The sequence spans 236 residues: Transcriptional activator protein SolR (236 aa).

The HTH luxR-type domain maps to 169-234; sequence VPESSAALTA…QAVVKAIAIG (66 aa). Residues 193–212 constitute a DNA-binding region (H-T-H motif); sequence AYEIGQILRISERTVNFHVN.

The protein belongs to the autoinducer-regulated transcriptional regulatory protein family.

The chain is Transcriptional activator protein SolR (solR) from Ralstonia nicotianae (strain ATCC BAA-1114 / GMI1000) (Ralstonia solanacearum).